Consider the following 347-residue polypeptide: DNA damage tolerance protein RHC31 (347 aa).

Ser9 bears the Phosphoserine mark. Residue Lys35 forms a Glycyl lysine isopeptide (Lys-Gly) (interchain with G-Cter in SUMO) linkage.

Its function is as follows. Could be involved in a ubiquitin-related process important for DNA damage tolerance. This is DNA damage tolerance protein RHC31 (AOS1) from Saccharomyces cerevisiae (strain ATCC 204508 / S288c) (Baker's yeast).